The sequence spans 312 residues: Ribonuclease HIII (312 aa).

The region spanning 95–312 is the RNase H type-2 domain; that stretch reads MSILGSDEVG…TEKAFRLLKK (218 aa). A divalent metal cation is bound by residues D101, E102, and D206.

Belongs to the RNase HII family. RnhC subfamily. Requires Mn(2+) as cofactor. It depends on Mg(2+) as a cofactor.

Its subcellular location is the cytoplasm. It carries out the reaction Endonucleolytic cleavage to 5'-phosphomonoester.. Its function is as follows. Endonuclease that specifically degrades the RNA of RNA-DNA hybrids. This Bacillus mycoides (strain KBAB4) (Bacillus weihenstephanensis) protein is Ribonuclease HIII.